Here is a 561-residue protein sequence, read N- to C-terminus: Oxygen-dependent choline dehydrogenase (561 aa).

An FAD-binding site is contributed by 7–36 (DYIIVGAGSAGNVLASRLAEDADVTVLLLE). Residue H474 is the Proton acceptor of the active site.

Belongs to the GMC oxidoreductase family. Requires FAD as cofactor.

It catalyses the reaction choline + A = betaine aldehyde + AH2. The catalysed reaction is betaine aldehyde + NAD(+) + H2O = glycine betaine + NADH + 2 H(+). It functions in the pathway amine and polyamine biosynthesis; betaine biosynthesis via choline pathway; betaine aldehyde from choline (cytochrome c reductase route): step 1/1. Involved in the biosynthesis of the osmoprotectant glycine betaine. Catalyzes the oxidation of choline to betaine aldehyde and betaine aldehyde to glycine betaine at the same rate. The protein is Oxygen-dependent choline dehydrogenase of Paraburkholderia xenovorans (strain LB400).